The sequence spans 782 residues: uncharacterized protein (782 aa).

Disordered stretches follow at residues 1–127, 205–234, and 308–355; these read MTTT…SAMK, NAAA…SYNP, and PYNF…SYLR. Residues 24–54 are compositionally biased toward basic and acidic residues; that stretch reads KPQEEPTMKDKALLFEKQRQEKKMKHTEAKM. A compositionally biased stretch (low complexity) spans 82-118; it reads KNVNNATSTNNATSTKNNTKNTPKNTPKNIPKNTTAK. Residues 312–324 are compositionally biased toward polar residues; that stretch reads ARNNHGSDVSSAM. Residues 326-336 are compositionally biased toward basic and acidic residues; sequence NARRQASETRR. Residues 337 to 346 are compositionally biased toward polar residues; sequence SNLSSYNDRN. The stretch at 361–628 forms a coiled coil; the sequence is MEKIRTEVDK…ERLRERLREL (268 aa). Over residues 629–668 the composition is skewed to basic and acidic residues; that stretch reads GSRDRSYNRSSRDRSHDRLYERSPRSRDRSSRDRSRDRYS. The tract at residues 629-689 is disordered; sequence GSRDRSYNRS…SDSVKDYSVG (61 aa). A compositionally biased stretch (basic residues) spans 669–678; sequence RSRSRSRYRR. Residues 679 to 689 are compositionally biased toward basic and acidic residues; sequence RSDSVKDYSVG.

This is an uncharacterized protein from Yarrowia lipolytica (strain CLIB 122 / E 150) (Yeast).